A 61-amino-acid chain; its full sequence is Large ribosomal subunit protein uL30 (61 aa).

The protein belongs to the universal ribosomal protein uL30 family. As to quaternary structure, part of the 50S ribosomal subunit.

The polypeptide is Large ribosomal subunit protein uL30 (Lactobacillus acidophilus (strain ATCC 700396 / NCK56 / N2 / NCFM)).